Reading from the N-terminus, the 203-residue chain is Sarcosine oxidase subunit gamma (203 aa).

This sequence belongs to the SoxG family. Heterotetramer composed of subunits alpha (SoxA), beta (SoxB), gamma (SoxG) and delta (SoxD).

The protein localises to the cytoplasm. It catalyses the reaction sarcosine + (6S)-5,6,7,8-tetrahydrofolate + O2 = (6R)-5,10-methylene-5,6,7,8-tetrahydrofolate + glycine + H2O2. The catalysed reaction is sarcosine + O2 + H2O = formaldehyde + glycine + H2O2. In the presence of tetrahydrofolate, catalyzes the oxidative demethylation of sarcosine to yield glycine, 5,10-methylenetetrahydrofolate and hydrogen peroxide. In the absence of tetrahydrofolate, catalyzes the oxidative demethylation of sarcosine to yield glycine, formaldehyde and hydrogen peroxide. The protein is Sarcosine oxidase subunit gamma (soxG) of Arthrobacter sp.